Reading from the N-terminus, the 751-residue chain is C2 domain-containing protein At1g53590 (751 aa).

2 consecutive transmembrane segments (helical) span residues 2-22 (ESSLIHHIIIVLLLLWFISSL) and 26-46 (HAFFYFLALIYLYLVHERYVM). Positions 68-262 (DSESVRWMNY…QPNMLVVDME (195 aa)) constitute an SMP-LTD domain. The 115-residue stretch at 267–381 (PTSENWFFVD…RGGQRNDMWL (115 aa)) folds into the C2 domain. Ca(2+) contacts are provided by Asp-298, Asp-304, Asp-352, Asp-354, and Asp-359. 2 disordered regions span residues 469–519 (QIWE…GRGL) and 572–751 (SGPL…SSSK). Residues 472–482 (EPRKGKSRRLD) show a composition bias toward basic and acidic residues. Positions 483–502 (SQIQRTPNDESLSNGSSSTD) are enriched in polar residues. Positions 590–611 (NSGKGHMKDVAKSFLKQAEKSA) are enriched in basic and acidic residues. Over residues 612–624 (KQIKHAFSRKGSM) the composition is skewed to basic residues. The span at 625 to 634 (KPRDGHKEIV) shows a compositional bias: basic and acidic residues. Acidic residues predominate over residues 639 to 651 (SGTDSESSDDDDA). 2 stretches are compositionally biased toward basic and acidic residues: residues 664–681 (KLTRDGNIERTGDDDHVD) and 703–751 (VEAK…SSSK). A coiled-coil region spans residues 701–728 (TDVEAKEEKLKEAAESETRDMDTAMNIK).

It belongs to the extended synaptotagmin family. Ca(2+) is required as a cofactor.

It localises to the membrane. This chain is C2 domain-containing protein At1g53590 (NTMC2T6.1), found in Arabidopsis thaliana (Mouse-ear cress).